The sequence spans 74 residues: Small ribosomal subunit protein eS17 (74 aa).

The protein belongs to the eukaryotic ribosomal protein eS17 family.

In Aeropyrum pernix (strain ATCC 700893 / DSM 11879 / JCM 9820 / NBRC 100138 / K1), this protein is Small ribosomal subunit protein eS17.